A 20-amino-acid polypeptide reads, in one-letter code: Endo-1,6-beta-glucanase (20 aa).

Belongs to the glycosyl hydrolase 5 (cellulase A) family.

The protein resides in the secreted. It is found in the extracellular space. The enzyme catalyses Random hydrolysis of (1-&gt;6)-linkages in (1-&gt;6)-beta-D-glucans.. In terms of biological role, endo-1,6-beta-glucanase that has highest activity against the beta-1,6-glucan pustulan. Also active against the beta-1,6-glucan lutean. Lower activity against laminarin (beta-1,3-glucan with beta-1,6-branches). Little or no activity against gentiobiose, yeast glucan, lichenin, scleroglucan, curdlan, barley glucan, CM cellulose, HE cellulose, pachyman and pullulan. This chain is Endo-1,6-beta-glucanase, found in Acremonium sp.